The primary structure comprises 320 residues: Large ribosomal subunit protein uL10y (320 aa).

The interval 289 to 320 is disordered; that stretch reads AGGGAPAAAKVEEKEESDEEDYGGDFGLFDEE. Residues 302 to 320 are compositionally biased toward acidic residues; sequence KEESDEEDYGGDFGLFDEE. Residue Ser-305 is modified to Phosphoserine. Residue Tyr-310 is modified to Phosphotyrosine.

It belongs to the universal ribosomal protein uL10 family. In terms of assembly, P0 forms a pentameric complex by interaction with dimers of P1 and P2.

In terms of biological role, ribosomal protein P0 is the functional equivalent of E.coli protein L10. This chain is Large ribosomal subunit protein uL10y (RPP0B), found in Arabidopsis thaliana (Mouse-ear cress).